The following is a 292-amino-acid chain: Aquaporin-3 (292 aa).

Over 1–24 (MGRQKELMNRCGEMLHIRYRLLRQ) the chain is Cytoplasmic. The chain crosses the membrane as a helical span at residues 25–42 (ALAECLGTLILVMFGCGS). Residues 43 to 56 (VAQVVLSRGTHGGF) are Extracellular-facing. Residues 57-74 (LTINLAFGFAVTLGILVA) form a helical membrane-spanning segment. Residues 75-78 (GQVS) are Cytoplasmic-facing. An intramembrane region (discontinuously helical) is located at residues 79–92 (GAHLNPAVTFAMCF). An NPA 1 motif is present at residues 83 to 85 (NPA). Residues 93 to 100 (LAREPWIK) are Cytoplasmic-facing. Residues 101–121 (LPIYALAQTLGAFLGAGIVFG) traverse the membrane as a helical segment. Topologically, residues 122-159 (LYYDAIWAFANNELFVSGPNGTAGIFATYPSGHLDMVN) are extracellular. N-linked (GlcNAc...) asparagine glycosylation occurs at Asn-141. The chain crosses the membrane as a helical span at residues 160–177 (GFFDQFIGTAALIVCVLA). Residues 178–189 (IVDPYNNPVPRG) are Cytoplasmic-facing. The chain crosses the membrane as a helical span at residues 190–206 (LEAFTVGLVVLVIGTSM). Topologically, residues 207–210 (GFNS) are extracellular. The discontinuously helical intramembrane region spans 211–224 (GYAVNPARDFGPRL). An NPA 2 motif is present at residues 215–217 (NPA). At 225–242 (FTALAGWGSEVFTTGRHW) the chain is on the extracellular side. Residues 243–264 (WWVPIVSPLLGSIAGVFVYQLM) form a helical membrane-spanning segment. Residues 265 to 292 (IGCHLEQPPPSTEEENVKLAHMKHKEQI) lie on the Cytoplasmic side of the membrane.

The protein belongs to the MIP/aquaporin (TC 1.A.8) family. Homotetramer; each monomer provides an independent glycerol/water pore. Could also exist in other oligomeric states. In terms of tissue distribution, detected in principal cells in collecting ducts in kidney medulla (at protein level). Renal medulla and colon. Predominantly in the inner medulla. Expressed in basal layer of epidermal keratinocytes.

It localises to the cell membrane. Its subcellular location is the basolateral cell membrane. The enzyme catalyses glycerol(in) = glycerol(out). It carries out the reaction H2O(in) = H2O(out). The catalysed reaction is urea(in) = urea(out). It catalyses the reaction H2O2(out) = H2O2(in). Functionally, aquaglyceroporins form homotetrameric transmembrane channels, with each monomer independently mediating glycerol and water transport across the plasma membrane along their osmotic gradient. Could also be permeable to urea. Also participates in cell permeability to H2O2 and H2O2-mediated signaling. In skin, transports glycerol to the epidermis and stratum corneum, where it maintains hydration, elasticity, and supports lipid biosynthesis for barrier repair. In kidney, contributes to the reabsorption of water, helping the body maintain proper fluid balance. The sequence is that of Aquaporin-3 from Mus musculus (Mouse).